The chain runs to 342 residues: Maltose regulon regulatory protein MalI (342 aa).

The region spanning 7–61 is the HTH lacI-type domain; sequence ITIHDVALAAGVSVSTVSLVLSGKGRISTATGERVNAAIEELGFVRNRQASALRG. Positions 9–28 form a DNA-binding region, H-T-H motif; it reads IHDVALAAGVSVSTVSLVLS.

In terms of biological role, repressor for the malX and malY genes. Also regulates its own expression. Binds maltose as an inducer. This is Maltose regulon regulatory protein MalI (malI) from Escherichia coli (strain K12).